The chain runs to 340 residues: GTP 3',8-cyclase (340 aa).

Residues 8–227 (KLGRPIRDLR…TMIEQHFEID (220 aa)) form the Radical SAM core domain. Arg17 contacts GTP. Cys24 and Cys28 together coordinate [4Fe-4S] cluster. Tyr30 contributes to the S-adenosyl-L-methionine binding site. A [4Fe-4S] cluster-binding site is contributed by Cys31. Arg71 is a GTP binding site. Residue Gly75 participates in S-adenosyl-L-methionine binding. GTP is bound at residue Thr102. Ser126 contributes to the S-adenosyl-L-methionine binding site. Lys163 contacts GTP. Position 197 (Met197) interacts with S-adenosyl-L-methionine. Residues Cys261 and Cys264 each coordinate [4Fe-4S] cluster. A GTP-binding site is contributed by 266-268 (RAR). A [4Fe-4S] cluster-binding site is contributed by Cys278.

It belongs to the radical SAM superfamily. MoaA family. Monomer and homodimer. [4Fe-4S] cluster serves as cofactor.

The enzyme catalyses GTP + AH2 + S-adenosyl-L-methionine = (8S)-3',8-cyclo-7,8-dihydroguanosine 5'-triphosphate + 5'-deoxyadenosine + L-methionine + A + H(+). It participates in cofactor biosynthesis; molybdopterin biosynthesis. Its function is as follows. Catalyzes the cyclization of GTP to (8S)-3',8-cyclo-7,8-dihydroguanosine 5'-triphosphate. The protein is GTP 3',8-cyclase of Staphylococcus aureus (strain MRSA252).